The chain runs to 561 residues: Phosphoinositide phospholipase C 1 (561 aa).

The 34-residue stretch at 21 to 54 (EPPEEIKNLFHDYSQDDRMSADEMLRFVIQVQGE) folds into the EF-hand domain. One can recognise a PI-PLC X-box domain in the interval 105–249 (QDMNQPLSHY…LKNKILISTK (145 aa)). Active-site residues include His120 and His166. A compositionally biased stretch (polar residues) spans 256–266 (QTQISKGSTTD). Positions 256-285 (QTQISKGSTTDESTRAKKISDAEEQVQEED) are disordered. Residues 267–276 (ESTRAKKISD) are compositionally biased toward basic and acidic residues. The PI-PLC Y-box domain occupies 294 to 410 (RDLISIHAGN…GYVKKPDVLL (117 aa)). The C2 domain occupies 414–541 (PEGEIFDPCS…PGIRAVRLHD (128 aa)). The Ca(2+) site is built by Asp452, Asp458, Asp510, Asp512, and Asp518.

The cofactor is Ca(2+). Expressed in stems, leaves, roots, flowers and siliques. Predominant in the vascular tissues of roots and leaves.

The protein localises to the cell membrane. The enzyme catalyses a 1,2-diacyl-sn-glycero-3-phospho-(1D-myo-inositol-4,5-bisphosphate) + H2O = 1D-myo-inositol 1,4,5-trisphosphate + a 1,2-diacyl-sn-glycerol + H(+). Its function is as follows. The production of the second messenger molecules diacylglycerol (DAG) and inositol 1,4,5-trisphosphate (IP3) is mediated by activated phosphatidylinositol-specific phospholipase C enzymes. Required for secondary responses to abscisic acid signals. The sequence is that of Phosphoinositide phospholipase C 1 (PLC1) from Arabidopsis thaliana (Mouse-ear cress).